We begin with the raw amino-acid sequence, 638 residues long: Chaperone protein HtpG (638 aa).

The tract at residues 1 to 346 (MSQQETHGFQ…SNDLPLNVSR (346 aa)) is a; substrate-binding. Residues 347–563 (EILQDNKVTT…EGEMSTQMIK (217 aa)) form a b region. The tract at residues 564 to 638 (LMEAAGQAVP…MNEMLLAKLK (75 aa)) is c.

It belongs to the heat shock protein 90 family. Homodimer.

It localises to the cytoplasm. Molecular chaperone. Has ATPase activity. This Shewanella sediminis (strain HAW-EB3) protein is Chaperone protein HtpG.